A 185-amino-acid chain; its full sequence is Probable chorismate pyruvate-lyase (185 aa).

Residues Arg-75, Leu-113, and Glu-170 each contribute to the substrate site.

This sequence belongs to the UbiC family.

It localises to the cytoplasm. The enzyme catalyses chorismate = 4-hydroxybenzoate + pyruvate. It functions in the pathway cofactor biosynthesis; ubiquinone biosynthesis. Functionally, removes the pyruvyl group from chorismate, with concomitant aromatization of the ring, to provide 4-hydroxybenzoate (4HB) for the ubiquinone pathway. This chain is Probable chorismate pyruvate-lyase, found in Coxiella burnetii (strain RSA 493 / Nine Mile phase I).